The chain runs to 226 residues: Large ribosomal subunit protein uL3 (226 aa).

The segment covering 135-150 (MSSQRASHGNSRSHNV) has biased composition (polar residues). Residues 135–158 (MSSQRASHGNSRSHNVPGSIGMAQ) form a disordered region. Position 158 is an N5-methylglutamine (Gln-158).

It belongs to the universal ribosomal protein uL3 family. As to quaternary structure, part of the 50S ribosomal subunit. Forms a cluster with proteins L14 and L19. Post-translationally, methylated by PrmB.

Functionally, one of the primary rRNA binding proteins, it binds directly near the 3'-end of the 23S rRNA, where it nucleates assembly of the 50S subunit. The polypeptide is Large ribosomal subunit protein uL3 (Variovorax paradoxus (strain S110)).